The chain runs to 259 residues: LOB domain-containing protein CRL1 (259 aa).

The region spanning Ser-6–Ala-108 is the LOB domain.

Belongs to the LOB domain-containing protein family. Can form homodimers. Expressed in unelongating basal internodes, at the base of shoot in parenchyma cells adjacent to the peripheral vascular cylinder of the stem, and root pericycle cells. Expressed in lateral and adventitious root primordia, tiller primordia, vascular tissues, scutellum, and young pedicels.

It localises to the nucleus. Functionally, acts as a positive regulator of adventitious (crown) root formation by promoting its initiation. Acts as a positive regulator of lateral root formation. Regulated by the auxin response factor and transcriptional activator ARF23/ARF1. Involved in auxin-mediated cell dedifferentiation, and may promote the initial cell division in the pericycle cells adjacent to the peripheral vascular cylinder at the base of the stem. May act upstream of the gene regulatory network controlling adventitious root (crown) development. In Oryza sativa subsp. japonica (Rice), this protein is LOB domain-containing protein CRL1.